The primary structure comprises 246 residues: Uridylate kinase (246 aa).

Residue 18–21 (KLSG) participates in ATP binding. Glycine 60 provides a ligand contact to UMP. ATP contacts are provided by glycine 61 and arginine 65. Residues aspartate 80 and 141–148 (TGNPFFTT) each bind UMP. ATP-binding residues include threonine 168, tyrosine 174, and aspartate 177.

Belongs to the UMP kinase family. In terms of assembly, homohexamer.

Its subcellular location is the cytoplasm. The enzyme catalyses UMP + ATP = UDP + ADP. Its pathway is pyrimidine metabolism; CTP biosynthesis via de novo pathway; UDP from UMP (UMPK route): step 1/1. Its activity is regulated as follows. Inhibited by UTP. Functionally, catalyzes the reversible phosphorylation of UMP to UDP. This is Uridylate kinase from Pseudomonas syringae pv. syringae (strain B728a).